A 162-amino-acid chain; its full sequence is Probable metalloprotease y4jG (162 aa).

The region spanning 9-147 (TVALPRDCVS…YRLDAKANWN (139 aa)) is the MPN domain. Zn(2+) is bound by residues histidine 94, histidine 96, and aspartate 107.

This sequence belongs to the peptidase M67B family.

The sequence is that of Probable metalloprotease y4jG from Sinorhizobium fredii (strain NBRC 101917 / NGR234).